The sequence spans 383 residues: Protein delta homolog 2 (383 aa).

The first 26 residues, M1–A26, serve as a signal peptide directing secretion. EGF-like domains are found at residues D27–E58, R62–D89, D91–E129, and K131–E172. Over D27–S306 the chain is Extracellular. Intrachain disulfides connect C29–C40, C33–C46, C48–C57, C66–C71, C79–C88, C95–C107, C101–C117, C119–C128, C135–C148, C142–C160, C162–C171, C178–C189, C183–C198, C200–C209, C216–C227, C221–C236, and C238–C247. The N-linked (GlcNAc...) asparagine glycan is linked to N157. Residues N174–T210 enclose the EGF-like 5; calcium-binding domain. The 37-residue stretch at N212 to E248 folds into the EGF-like 6; calcium-binding domain. A helical membrane pass occupies residues L307–L327. Over T328–L383 the chain is Cytoplasmic.

The protein resides in the membrane. Its function is as follows. Regulates adipogenesis. The protein is Protein delta homolog 2 (DLK2) of Homo sapiens (Human).